Consider the following 568-residue polypeptide: Urease subunit alpha (568 aa).

The region spanning Gly131–Phe568 is the Urease domain. The Ni(2+) site is built by His136, His138, and Lys219. Lys219 carries the N6-carboxylysine modification. Residue His221 coordinates substrate. Ni(2+)-binding residues include His248 and His274. His322 functions as the Proton donor in the catalytic mechanism. Residue Asp362 participates in Ni(2+) binding.

It belongs to the metallo-dependent hydrolases superfamily. Urease alpha subunit family. As to quaternary structure, heterotrimer of UreA (gamma), UreB (beta) and UreC (alpha) subunits. Three heterotrimers associate to form the active enzyme. The cofactor is Ni cation. In terms of processing, carboxylation allows a single lysine to coordinate two nickel ions.

The protein localises to the cytoplasm. It catalyses the reaction urea + 2 H2O + H(+) = hydrogencarbonate + 2 NH4(+). Its pathway is nitrogen metabolism; urea degradation; CO(2) and NH(3) from urea (urease route): step 1/1. The protein is Urease subunit alpha of Nostoc sp. (strain PCC 7120 / SAG 25.82 / UTEX 2576).